The sequence spans 298 residues: Zinc import ATP-binding protein ZnuC (298 aa).

Residues Ile17–Arg232 enclose the ABC transporter domain. Residue Gly49–Ser56 coordinates ATP. The disordered stretch occupies residues Arg273–Ala298. Over residues Cys276–Ala298 the composition is skewed to basic and acidic residues.

This sequence belongs to the ABC transporter superfamily. Zinc importer (TC 3.A.1.15.5) family. In terms of assembly, the complex is composed of two ATP-binding proteins (ZnuC), two transmembrane proteins (ZnuB) and a solute-binding protein (ZnuA).

Its subcellular location is the cell inner membrane. It catalyses the reaction Zn(2+)(out) + ATP(in) + H2O(in) = Zn(2+)(in) + ADP(in) + phosphate(in) + H(+)(in). Part of the ABC transporter complex ZnuABC involved in zinc import. Responsible for energy coupling to the transport system. This chain is Zinc import ATP-binding protein ZnuC, found in Brucella abortus (strain 2308).